Here is a 566-residue protein sequence, read N- to C-terminus: Mucolipin-2 (566 aa).

Over 1–65 (MARQPYRFPQ…YRARRQIPWK (65 aa)) the chain is Cytoplasmic. A helical membrane pass occupies residues 66–86 (LGLQILKIVMVTTQLVRFGLS). At 87–288 (NQLVVAFKED…IFGSTQKNAQ (202 aa)) the chain is on the extracellular side. Positions 107–123 (KGYSGTDEDDYSCSVYT) are extracellular/lumenal pore loop. Intrachain disulfides connect Cys-164-Cys-190 and Cys-243-Cys-274. A helical membrane pass occupies residues 289–309 (YVLVFDAFVIVICLASLILCT). The Cytoplasmic segment spans residues 310–346 (RSIVLALRLRKRFLNFFLEKYKRPVCDTDQWEFINGW). Residues 347–367 (YVLVIISDLMTIIGSILKMEI) traverse the membrane as a helical segment. Over 368–376 (KAKNLTNYD) the chain is Extracellular. The helical transmembrane segment at 377–397 (LCSIFLGTSTLLVWVGVIRYL) threads the bilayer. Topologically, residues 398-419 (GYFQAYNVLILTMQASLPKVLR) are cytoplasmic. A helical transmembrane segment spans residues 420 to 440 (FCACAGMIYLGYTFCGWIVLG). At 441 to 448 (PYHDKFEN) the chain is on the extracellular side. The pore-forming intramembrane region spans 449-469 (LNTVAECLFSLVNGDDMFATF). Positions 461 to 464 (NGDD) match the Selectivity filter motif. Residues 470–480 (AQIQQKSILVW) lie on the Extracellular side of the membrane. A helical transmembrane segment spans residues 481–502 (LFSRLYLYSFISLFIYMILSLF). Topologically, residues 503 to 566 (IALITDSYDT…RSDDHLIPIS (64 aa)) are cytoplasmic.

The protein belongs to the transient receptor (TC 1.A.4) family. Polycystin subfamily. MCOLN2 sub-subfamily. As to quaternary structure, forms homooligomeric complexes; probably tetrameric. Can heterooligomerize with MCOLN1; heteromeric assemblies have different channel properties as compared to the respective homooligomers and may be tissue-specific. Interacts with TMEM176A.

The protein localises to the cell membrane. The protein resides in the late endosome membrane. It is found in the lysosome membrane. It localises to the recycling endosome membrane. It catalyses the reaction Ca(2+)(in) = Ca(2+)(out). The enzyme catalyses Fe(2+)(in) = Fe(2+)(out). Its activity is regulated as follows. Channel activity is reduced by low extracellular/lumenal pH level. Functionally, nonselective cation channel probably playing a role in the regulation of membrane trafficking events. Acts as a Ca(2+)-permeable cation channel with inwardly rectifying activity. May activate ARF6 and be involved in the trafficking of GPI-anchored cargo proteins to the cell surface via the ARF6-regulated recycling pathway. May play a role in immune processes. In adaptive immunity, TRPML2 and TRPML1 may play redundant roles in the function of the specialized lysosomes of B cells. In the innate immune response, may play a role in the regulation of chemokine secretion and macrophage migration. Through a possible and probably tissue-specific heteromerization with MCOLN1 may be at least in part involved in many lysosome-dependent cellular events. Also functions as a Fe(2+) permeable channel. In Homo sapiens (Human), this protein is Mucolipin-2.